Here is a 533-residue protein sequence, read N- to C-terminus: Peptide chain release factor 3 (533 aa).

In terms of domain architecture, tr-type G spans 10–278 (EKRRTFAIIS…TFVEIAPPPQ (269 aa)). GTP is bound by residues 19–26 (SHPDAGKT), 87–91 (DTPGH), and 141–144 (NKMD).

This sequence belongs to the TRAFAC class translation factor GTPase superfamily. Classic translation factor GTPase family. PrfC subfamily.

Its subcellular location is the cytoplasm. Functionally, increases the formation of ribosomal termination complexes and stimulates activities of RF-1 and RF-2. It binds guanine nucleotides and has strong preference for UGA stop codons. It may interact directly with the ribosome. The stimulation of RF-1 and RF-2 is significantly reduced by GTP and GDP, but not by GMP. This chain is Peptide chain release factor 3, found in Salinibacter ruber (strain DSM 13855 / M31).